The sequence spans 824 residues: Dapper 1 (824 aa).

Disordered regions lie at residues 1–34 (MKPIPATPDHLGQHQESPRRKDKGEAESERQRTR), 61–80 (ALTPGAPTHGDTATRAGDTP), 131–150 (EEHLETDSRPSSGFYELSDG), 454–487 (TSNVQKENVTPNAPTNLSNASSSACNGSPRESTQ), and 516–536 (ASSSFDERPPLDFKSEGSSSQ). An interaction with tcf7l1 region spans residues 2-343 (KPIPATPDHL…PVRTNKPRTS (342 aa)). A compositionally biased stretch (basic and acidic residues) spans 11-34 (LGQHQESPRRKDKGEAESERQRTR). The stretch at 19–47 (RRKDKGEAESERQRTRERLEATLAGLAEL) forms a coiled coil. A compositionally biased stretch (basic and acidic residues) spans 520–530 (FDERPPLDFKS). A PDZ-binding motif is present at residues 821 to 824 (MTTV).

This sequence belongs to the dapper family. Interacts with dbf4, dvl2 and tcf7l1.

The protein resides in the cytoplasm. The protein localises to the nucleus. Involved in regulation of intracellular signaling pathways during development. Specifically thought to play a role in canonical and/or non-canonical Wnt signaling pathways through interaction with DSH (Dishevelled) family proteins. Binds to dvl2 and regulates the degradation of ctnnb1/beta-catenin, thereby modulating the transcriptional activation of target genes of the Wnt signaling pathway. May also bind to and directly stimulate the activity of tcf7l1. This is Dapper 1 (dact1) from Xenopus tropicalis (Western clawed frog).